The sequence spans 492 residues: N-succinylglutamate 5-semialdehyde dehydrogenase (492 aa).

NAD(+) is bound at residue 220–225; it reads GSASTG. Residues Glu-243 and Cys-277 contribute to the active site.

The protein belongs to the aldehyde dehydrogenase family. AstD subfamily.

The catalysed reaction is N-succinyl-L-glutamate 5-semialdehyde + NAD(+) + H2O = N-succinyl-L-glutamate + NADH + 2 H(+). The protein operates within amino-acid degradation; L-arginine degradation via AST pathway; L-glutamate and succinate from L-arginine: step 4/5. In terms of biological role, catalyzes the NAD-dependent reduction of succinylglutamate semialdehyde into succinylglutamate. In Salmonella enteritidis PT4 (strain P125109), this protein is N-succinylglutamate 5-semialdehyde dehydrogenase.